The following is a 339-amino-acid chain: RNA 3'-terminal phosphate cyclase (339 aa).

ATP-binding positions include Gln-101 and 283–286 (HMSD). Residue His-307 is the Tele-AMP-histidine intermediate of the active site.

It belongs to the RNA 3'-terminal cyclase family. Type 1 subfamily.

It is found in the cytoplasm. It catalyses the reaction a 3'-end 3'-phospho-ribonucleotide-RNA + ATP = a 3'-end 2',3'-cyclophospho-ribonucleotide-RNA + AMP + diphosphate. In terms of biological role, catalyzes the conversion of 3'-phosphate to a 2',3'-cyclic phosphodiester at the end of RNA. The mechanism of action of the enzyme occurs in 3 steps: (A) adenylation of the enzyme by ATP; (B) transfer of adenylate to an RNA-N3'P to produce RNA-N3'PP5'A; (C) and attack of the adjacent 2'-hydroxyl on the 3'-phosphorus in the diester linkage to produce the cyclic end product. The biological role of this enzyme is unknown but it is likely to function in some aspects of cellular RNA processing. The protein is RNA 3'-terminal phosphate cyclase of Sulfurisphaera tokodaii (strain DSM 16993 / JCM 10545 / NBRC 100140 / 7) (Sulfolobus tokodaii).